A 315-amino-acid chain; its full sequence is Porphobilinogen deaminase (315 aa).

Cys251 is subject to S-(dipyrrolylmethanemethyl)cysteine.

This sequence belongs to the HMBS family. In terms of assembly, monomer. The cofactor is dipyrromethane.

It catalyses the reaction 4 porphobilinogen + H2O = hydroxymethylbilane + 4 NH4(+). The protein operates within porphyrin-containing compound metabolism; protoporphyrin-IX biosynthesis; coproporphyrinogen-III from 5-aminolevulinate: step 2/4. Its function is as follows. Tetrapolymerization of the monopyrrole PBG into the hydroxymethylbilane pre-uroporphyrinogen in several discrete steps. The sequence is that of Porphobilinogen deaminase from Sphingopyxis alaskensis (strain DSM 13593 / LMG 18877 / RB2256) (Sphingomonas alaskensis).